The sequence spans 349 residues: UDP-N-acetylenolpyruvoylglucosamine reductase (349 aa).

The FAD-binding PCMH-type domain occupies Gly-25–Arg-197. The active site involves Arg-173. The active-site Proton donor is the Ser-249. Residue Glu-345 is part of the active site.

This sequence belongs to the MurB family. FAD is required as a cofactor.

The protein localises to the cytoplasm. The catalysed reaction is UDP-N-acetyl-alpha-D-muramate + NADP(+) = UDP-N-acetyl-3-O-(1-carboxyvinyl)-alpha-D-glucosamine + NADPH + H(+). It participates in cell wall biogenesis; peptidoglycan biosynthesis. In terms of biological role, cell wall formation. This chain is UDP-N-acetylenolpyruvoylglucosamine reductase, found in Burkholderia vietnamiensis (strain G4 / LMG 22486) (Burkholderia cepacia (strain R1808)).